A 484-amino-acid chain; its full sequence is UDP-N-acetylmuramoyl-L-alanyl-D-glutamate--2,6-diaminopimelate ligase (484 aa).

G110–T116 is an ATP binding site. Residues T152 to T153, S179, and R187 contribute to the UDP-N-acetyl-alpha-D-muramoyl-L-alanyl-D-glutamate site. At K219 the chain carries N6-carboxylysine. Meso-2,6-diaminopimelate is bound by residues R381, D405 to R408, G455, and E459. Positions D405–R408 match the Meso-diaminopimelate recognition motif motif.

This sequence belongs to the MurCDEF family. MurE subfamily. Mg(2+) serves as cofactor. Carboxylation is probably crucial for Mg(2+) binding and, consequently, for the gamma-phosphate positioning of ATP.

It is found in the cytoplasm. The catalysed reaction is UDP-N-acetyl-alpha-D-muramoyl-L-alanyl-D-glutamate + meso-2,6-diaminopimelate + ATP = UDP-N-acetyl-alpha-D-muramoyl-L-alanyl-gamma-D-glutamyl-meso-2,6-diaminopimelate + ADP + phosphate + H(+). It functions in the pathway cell wall biogenesis; peptidoglycan biosynthesis. In terms of biological role, catalyzes the addition of meso-diaminopimelic acid to the nucleotide precursor UDP-N-acetylmuramoyl-L-alanyl-D-glutamate (UMAG) in the biosynthesis of bacterial cell-wall peptidoglycan. The sequence is that of UDP-N-acetylmuramoyl-L-alanyl-D-glutamate--2,6-diaminopimelate ligase from Clostridium perfringens (strain 13 / Type A).